The primary structure comprises 402 residues: Homoserine O-acetyltransferase (402 aa).

Residues 1–17 (MDWQTTSADTAPSSFIT) are compositionally biased toward polar residues. Residues 1 to 39 (MDWQTTSADTAPSSFITEEQDRSLFGKPPASGAWKESDP) form a disordered region. The AB hydrolase-1 domain maps to 78–388 (NAVLVLHALT…HFGHDGFLIE (311 aa)). Serine 183 functions as the Nucleophile in the catalytic mechanism. Arginine 255 contacts substrate. Active-site residues include aspartate 349 and histidine 382. Aspartate 383 contributes to the substrate binding site.

It belongs to the AB hydrolase superfamily. MetX family. Homodimer.

Its subcellular location is the cytoplasm. The enzyme catalyses L-homoserine + acetyl-CoA = O-acetyl-L-homoserine + CoA. Its pathway is amino-acid biosynthesis; L-methionine biosynthesis via de novo pathway; O-acetyl-L-homoserine from L-homoserine: step 1/1. In terms of biological role, transfers an acetyl group from acetyl-CoA to L-homoserine, forming acetyl-L-homoserine. This Leifsonia xyli subsp. xyli (strain CTCB07) protein is Homoserine O-acetyltransferase.